We begin with the raw amino-acid sequence, 150 residues long: Macrodomain Ter protein (150 aa).

The protein belongs to the MatP family. Homodimer.

It localises to the cytoplasm. Required for spatial organization of the terminus region of the chromosome (Ter macrodomain) during the cell cycle. Prevents early segregation of duplicated Ter macrodomains during cell division. Binds specifically to matS, which is a 13 bp signature motif repeated within the Ter macrodomain. The polypeptide is Macrodomain Ter protein (Salmonella typhi).